The primary structure comprises 125 residues: Small ribosomal subunit protein uS17 (125 aa).

2 disordered regions span residues 1–21 and 101–125; these read MSSSPAQRHTRKTQIGFVSSR and VAAQVPTKTTASNTPAPAEQPAPQA.

The protein belongs to the universal ribosomal protein uS17 family. In terms of assembly, part of the 30S ribosomal subunit.

One of the primary rRNA binding proteins, it binds specifically to the 5'-end of 16S ribosomal RNA. This Opitutus terrae (strain DSM 11246 / JCM 15787 / PB90-1) protein is Small ribosomal subunit protein uS17.